Consider the following 894-residue polypeptide: Valine--tRNA ligase (894 aa).

Positions Met1 to Gln22 are enriched in polar residues. A disordered region spans residues Met1–Tyr28. A 'HIGH' region motif is present at residues Pro69–His79. A 'KMSKS' region motif is present at residues Lys554 to Ser558. Residue Lys557 coordinates ATP. A coiled-coil region spans residues Ile832–Gly894.

Belongs to the class-I aminoacyl-tRNA synthetase family. ValS type 1 subfamily. As to quaternary structure, monomer.

The protein resides in the cytoplasm. The enzyme catalyses tRNA(Val) + L-valine + ATP = L-valyl-tRNA(Val) + AMP + diphosphate. Its function is as follows. Catalyzes the attachment of valine to tRNA(Val). As ValRS can inadvertently accommodate and process structurally similar amino acids such as threonine, to avoid such errors, it has a 'posttransfer' editing activity that hydrolyzes mischarged Thr-tRNA(Val) in a tRNA-dependent manner. The chain is Valine--tRNA ligase from Wolinella succinogenes (strain ATCC 29543 / DSM 1740 / CCUG 13145 / JCM 31913 / LMG 7466 / NCTC 11488 / FDC 602W) (Vibrio succinogenes).